We begin with the raw amino-acid sequence, 1013 residues long: 2-oxoglutarate dehydrogenase, mitochondrial (1013 aa).

The transit peptide at 1 to 39 directs the protein to the mitochondrion; it reads MFTLKQVINKSIQTSMKNGVMSSAVKRSFSTVGGINQPK. The thiamine diphosphate site is built by Arg302, Asp403, Asn436, Ile438, and Gln664. Mg(2+)-binding residues include Asp403, Asn436, and Ile438.

The protein belongs to the alpha-ketoglutarate dehydrogenase family. Homodimer. Component of the 2-oxoglutarate dehydrogenase complex. Thiamine diphosphate serves as cofactor. Requires Mg(2+) as cofactor.

The protein resides in the mitochondrion matrix. The enzyme catalyses N(6)-[(R)-lipoyl]-L-lysyl-[protein] + 2-oxoglutarate + H(+) = N(6)-[(R)-S(8)-succinyldihydrolipoyl]-L-lysyl-[protein] + CO2. The 2-oxoglutarate dehydrogenase complex catalyzes the overall conversion of 2-oxoglutarate to succinyl-CoA and CO(2). It contains multiple copies of three enzymatic components: 2-oxoglutarate dehydrogenase (E1), dihydrolipoamide succinyltransferase (E2) and lipoamide dehydrogenase (E3). The chain is 2-oxoglutarate dehydrogenase, mitochondrial (ogdh) from Dictyostelium discoideum (Social amoeba).